Reading from the N-terminus, the 881-residue chain is Putative outer membrane usher protein YfcU (881 aa).

The N-terminal stretch at 1–29 (MPDHSLFRLRILPWCIALAMSGSYSSVWA) is a signal peptide.

Belongs to the fimbrial export usher family.

Its subcellular location is the cell outer membrane. In terms of biological role, part of the yfcOPQRSUV fimbrial operon. Could contribute to adhesion to various surfaces in specific environmental niches. Increases adhesion to eukaryotic T24 bladder epithelial cells in the absence of fim genes. Probably involved in the export and assembly of fimbrial subunits across the outer membrane. The polypeptide is Putative outer membrane usher protein YfcU (yfcU) (Escherichia coli (strain K12)).